Consider the following 134-residue polypeptide: Large ribosomal subunit protein uL14 (134 aa).

It belongs to the universal ribosomal protein uL14 family. As to quaternary structure, part of the 50S ribosomal subunit. Forms a cluster with proteins L3 and L19. In the 70S ribosome, L14 and L19 interact and together make contacts with the 16S rRNA in bridges B5 and B8.

Binds to 23S rRNA. Forms part of two intersubunit bridges in the 70S ribosome. The protein is Large ribosomal subunit protein uL14 of Deinococcus geothermalis (strain DSM 11300 / CIP 105573 / AG-3a).